The primary structure comprises 861 residues: MPILLFLIDTSASMNQRTDLGTSYLDIAKGAVELFLKLRARDPASRGDRYMLVTYDEPPYCIKAGWKENHATFMNELKNLQASGLTTLGQALRSSFDLLNLNRLISGIDNYGQGRNPFFLEPSILITITDGNKLTSTASVQEELHLPLNSPLPGSELTKEPFRWDQRLFALVLRLPGVASTEPEQLGSVPSDESAITQMCEVTGGRSYCVRTQRMLNQCLESLVQKVQSGVVINFEKTGPDPLPVGEDTLMELCRPSNLFAAQPWHSCHKLIYVRPNSKTGVPVGHWPIPESFWPEQNLPSLPPRTSHPVVRFSCVDCEPMVIDKLPFDKYELEPSPLTQYILERKSPHTCWQVFVTSSSKYNELGYPFGYLKASTTLTCVNLFVMPYNYPVLLPLLDDLFKVHKLKPNLKWRQAFDSYLKTLPPYYLITKLESDQILASVGKKPPQEIGIKVKNHSACGLPLAHNKSFRKLLKEIIGESAPRLTELNPKEFAGFQVGLLNKDLKPQTYRNAYDIPRRGLLDQLTRMRSNLLQTRKFIVGQDEDSLHSVPVAQMGNYQEYLKMLASPLRELDPDQPKRLHTFGNPFKQDKKGMMIDEADEFVVGPQNKVKRPGEPNSPMSSKRRRSMSLLLRRAQTAPTVTNHVGGKGPLSASWFPSCPSLVKHTFGHPDTTVIHDTHEEKMENGQSPPDGFLLKSAPAEFMNVSGESFISSQLDSLSDDFTGLRKDGFIHKPGNNILLGGAKTCSLSVADQKITMASALETVPNSMQITPAMAQGINADIKHQLMKEVRKFGRKYERIFILLEEVQGPLETKKQFVEFTIKEAARFKRRVLIQYLEKVLEKIDSHHLLNNVNHINSRSSC.

The VWFA domain occupies Ile3–Val227. Residue Ser617 is modified to Phosphoserine.

In Mus musculus (Mouse), this protein is Integrator complex subunit 6-like (Ints6l).